We begin with the raw amino-acid sequence, 363 residues long: 3-dehydroquinate synthase (363 aa).

Residues 72 to 77 (SGEKEK), 130 to 131 (TT), K142, and K151 contribute to the NAD(+) site. The Zn(2+) site is built by E184, H247, and H264.

This sequence belongs to the sugar phosphate cyclases superfamily. Dehydroquinate synthase family. The cofactor is Co(2+). It depends on Zn(2+) as a cofactor. NAD(+) serves as cofactor.

It is found in the cytoplasm. The catalysed reaction is 7-phospho-2-dehydro-3-deoxy-D-arabino-heptonate = 3-dehydroquinate + phosphate. Its pathway is metabolic intermediate biosynthesis; chorismate biosynthesis; chorismate from D-erythrose 4-phosphate and phosphoenolpyruvate: step 2/7. Functionally, catalyzes the conversion of 3-deoxy-D-arabino-heptulosonate 7-phosphate (DAHP) to dehydroquinate (DHQ). In Bacillus thuringiensis (strain Al Hakam), this protein is 3-dehydroquinate synthase.